A 383-amino-acid chain; its full sequence is Putative glutamate--cysteine ligase 2 (383 aa).

Belongs to the glutamate--cysteine ligase type 2 family. YbdK subfamily.

The catalysed reaction is L-cysteine + L-glutamate + ATP = gamma-L-glutamyl-L-cysteine + ADP + phosphate + H(+). Functionally, ATP-dependent carboxylate-amine ligase which exhibits weak glutamate--cysteine ligase activity. The polypeptide is Putative glutamate--cysteine ligase 2 (Clavibacter michiganensis subsp. michiganensis (strain NCPPB 382)).